The primary structure comprises 239 residues: Vesicle-associated protein 1-3 (239 aa).

Met1 is subject to N-acetylmethionine. Thr2 carries the N-acetylthreonine; in Vesicle-associated protein 1-3, N-terminally processed modification. Topologically, residues 2–215 are cytoplasmic; that stretch reads TTGDLVNIHP…RKETSKKQSG (214 aa). The region spanning 6–127 is the MSP domain; it reads LVNIHPTELK…EDFKLRVVYI (122 aa). A phosphoserine mark is found at Ser133 and Ser164. Residues 179-214 adopt a coiled-coil conformation; the sequence is SMISKLTEEKTSATQQSQKLRLELEMLRKETSKKQS. Residues 216–236 traverse the membrane as a helical; Anchor for type IV membrane protein segment; that stretch reads GHSLLLMLLVGLLGCVIGYLL.

It belongs to the VAMP-associated protein (VAP) (TC 9.B.17) family.

It localises to the endoplasmic reticulum membrane. Its function is as follows. May play a role in vesicle trafficking. The polypeptide is Vesicle-associated protein 1-3 (PVA13) (Arabidopsis thaliana (Mouse-ear cress)).